A 553-amino-acid chain; its full sequence is Threonylcarbamoyladenosine tRNA methylthiotransferase (553 aa).

Residues 21-61 (SAEDVKPQERYQNKKSVTVRAKKRVQIKPETDAEEKPTPRP) form a disordered region. 2 stretches are compositionally biased toward basic and acidic residues: residues 23-32 (EDVKPQERYQ) and 47-58 (IKPETDAEEKPT). The MTTase N-terminal domain occupies 72-179 (QKVFVKTWGC…VVEVVEETLK (108 aa)). Residues Cys-81, Cys-116, Cys-145, Cys-221, Cys-225, and Cys-228 each coordinate [4Fe-4S] cluster. The Radical SAM core domain maps to 207-438 (RKNPLIEIIS…DLFYSYEPYA (232 aa)). The region spanning 438-500 (AQRVGEMYTV…KFSMVGEILD (63 aa)) is the TRAM domain. A helical membrane pass occupies residues 533–553 (VGIALVVGSLAFLLQLLIRFL).

This sequence belongs to the methylthiotransferase family. CDKAL1 subfamily. Requires [4Fe-4S] cluster as cofactor.

It localises to the membrane. It carries out the reaction N(6)-L-threonylcarbamoyladenosine(37) in tRNA + (sulfur carrier)-SH + AH2 + 2 S-adenosyl-L-methionine = 2-methylsulfanyl-N(6)-L-threonylcarbamoyladenosine(37) in tRNA + (sulfur carrier)-H + 5'-deoxyadenosine + L-methionine + A + S-adenosyl-L-homocysteine + 2 H(+). In terms of biological role, catalyzes the methylthiolation of N6-threonylcarbamoyladenosine (t(6)A), leading to the formation of 2-methylthio-N6-threonylcarbamoyladenosine (ms(2)t(6)A) at position 37 in tRNAs that read codons beginning with adenine. This is Threonylcarbamoyladenosine tRNA methylthiotransferase from Drosophila pseudoobscura pseudoobscura (Fruit fly).